A 224-amino-acid polypeptide reads, in one-letter code: Phosphoribosylformylglycinamidine synthase subunit PurQ (224 aa).

Positions 4 to 224 constitute a Glutamine amidotransferase type-1 domain; sequence FGIIVFPGSN…ATDGLAMFIS (221 aa). The active-site Nucleophile is the Cys87. Active-site residues include His204 and Glu206.

In terms of assembly, part of the FGAM synthase complex composed of 1 PurL, 1 PurQ and 2 PurS subunits.

The protein resides in the cytoplasm. It carries out the reaction N(2)-formyl-N(1)-(5-phospho-beta-D-ribosyl)glycinamide + L-glutamine + ATP + H2O = 2-formamido-N(1)-(5-O-phospho-beta-D-ribosyl)acetamidine + L-glutamate + ADP + phosphate + H(+). It catalyses the reaction L-glutamine + H2O = L-glutamate + NH4(+). Its pathway is purine metabolism; IMP biosynthesis via de novo pathway; 5-amino-1-(5-phospho-D-ribosyl)imidazole from N(2)-formyl-N(1)-(5-phospho-D-ribosyl)glycinamide: step 1/2. Its function is as follows. Part of the phosphoribosylformylglycinamidine synthase complex involved in the purines biosynthetic pathway. Catalyzes the ATP-dependent conversion of formylglycinamide ribonucleotide (FGAR) and glutamine to yield formylglycinamidine ribonucleotide (FGAM) and glutamate. The FGAM synthase complex is composed of three subunits. PurQ produces an ammonia molecule by converting glutamine to glutamate. PurL transfers the ammonia molecule to FGAR to form FGAM in an ATP-dependent manner. PurS interacts with PurQ and PurL and is thought to assist in the transfer of the ammonia molecule from PurQ to PurL. The polypeptide is Phosphoribosylformylglycinamidine synthase subunit PurQ (Synechocystis sp. (strain ATCC 27184 / PCC 6803 / Kazusa)).